We begin with the raw amino-acid sequence, 694 residues long: Voltage-gated chloride channel TMC4 (694 aa).

The tract at residues 1 to 21 (MEAWGQSPACSSSRKARTGPS) is disordered. Residues 1 to 150 (MEAWGQSPAC…GTESYFSLLR (150 aa)) lie on the Extracellular side of the membrane. The helical transmembrane segment at 151–171 (FLLFLNLVASVIEICMKLIPT) threads the bilayer. Topologically, residues 172–231 (WLEGAPPGPPGPNISSPCGSYIPHTHGLVAFPTQLFNLLSGEGYLEWSPLFYGFYPPRSN) are cytoplasmic. Residues 232–252 (LAITYLCSVFAISVIYLLCIL) form a helical membrane-spanning segment. Over 253-330 (RRSVSGLKET…SQRAKVWSMR (78 aa)) the chain is Extracellular. A helical transmembrane segment spans residues 331–351 (ALLNVLVLALLGAAFYGIYWA). Residues 352-376 (TEYTLTLQETPLVRQTPLFKLLVDY) lie on the Cytoplasmic side of the membrane. A helical membrane pass occupies residues 377–397 (LPSIFISLFNFVLPPVFKFIA). Topologically, residues 398–407 (SLEGYTQSRQ) are extracellular. The helical transmembrane segment at 408 to 428 (IVLILLRTVFLRLASLVFLLV) threads the bilayer. At 429–465 (SLWSQITCGGNMEAEGCKACGYNYKEIPCWETRLGQE) the chain is on the cytoplasmic side. Residues 466-486 (MYKLVLFDLLMGLLVTLLVQF) form a helical membrane-spanning segment. Residues 487 to 513 (PRKILCGLCPGALGRLSGTLEFQVPDE) lie on the Extracellular side of the membrane. Residues 514–534 (VLGLIYAQTVVWVGSFFCPLL) form a helical membrane-spanning segment. Position 535 (P535) is a topological domain, cytoplasmic. A helical membrane pass occupies residues 536–556 (LINTAKFLILFCLKKITLFSI). The Extracellular portion of the chain corresponds to 557-574 (YSPASRTFRASTANFFFP). The chain crosses the membrane as a helical span at residues 575 to 595 (LVLLVGLAISAVPVLYSIFLI). The Cytoplasmic segment spans residues 596–635 (PPSKLCGPFRGKLSIWAQIPEAIESLPQTAQNFLYFLGTQ). A helical transmembrane segment spans residues 636–656 (AFTVPLLILSSILMMYTVALA). Residues 657–694 (NCYGRLISELKRQIETEVQNKVFLAQRAVALSSRNGTS) lie on the Extracellular side of the membrane. N-linked (GlcNAc...) asparagine glycosylation occurs at N691.

This sequence belongs to the TMC family. Expressed in taste bud cells of the posterior tongue. Ubiquitously expressed.

The protein resides in the membrane. It carries out the reaction chloride(in) = chloride(out). Voltage-gated chloride channel involved in high-concentration salt taste sensation. Depolarization induced by high NaCl concentration may trigger the activation of TMC4-mediated chloride influx into taste bud cells, helping the return to resting potential. Also allows permeation of organic anions including gluconate, but their current amplitudes at positive potentials are less than that of chloride. Involved in pH and temperature-dependent modulation of salty taste. This Mus musculus (Mouse) protein is Voltage-gated chloride channel TMC4.